A 280-amino-acid polypeptide reads, in one-letter code: DCN1-like protein 4 (280 aa).

A disordered region spans residues 37 to 71 (GPESHGTACCSRAMPPRKKRRPTAGDDLSAKKSRQ). The DCUN1 domain maps to 89–275 (FSSKRCLEWF…LLDEFVEWYK (187 aa)).

In terms of assembly, may interact (via the DCUN1 domain) with unneddylated cullins.

The protein localises to the nucleus. Contributes to the neddylation of all cullins by transferring NEDD8 from N-terminally acetylated NEDD8-conjugating E2s enzyme to different cullin C-terminal domain-RBX complexes. This chain is DCN1-like protein 4, found in Danio rerio (Zebrafish).